The chain runs to 89 residues: Small ribosomal subunit protein uS14 (89 aa).

Belongs to the universal ribosomal protein uS14 family. Part of the 30S ribosomal subunit. Contacts proteins S3 and S10.

In terms of biological role, binds 16S rRNA, required for the assembly of 30S particles and may also be responsible for determining the conformation of the 16S rRNA at the A site. This is Small ribosomal subunit protein uS14 from Phytoplasma australiense.